We begin with the raw amino-acid sequence, 274 residues long: NH(3)-dependent NAD(+) synthetase (274 aa).

46–53 (GISGGQDS) provides a ligand contact to ATP. Asp-52 lines the Mg(2+) pocket. Residue Arg-140 coordinates deamido-NAD(+). Residue Thr-160 participates in ATP binding. Glu-165 serves as a coordination point for Mg(2+). Deamido-NAD(+)-binding residues include Lys-173 and Asp-180. Residues Lys-189 and Thr-211 each coordinate ATP. 260 to 261 (HK) is a binding site for deamido-NAD(+).

It belongs to the NAD synthetase family. In terms of assembly, homodimer.

It carries out the reaction deamido-NAD(+) + NH4(+) + ATP = AMP + diphosphate + NAD(+) + H(+). It participates in cofactor biosynthesis; NAD(+) biosynthesis; NAD(+) from deamido-NAD(+) (ammonia route): step 1/1. Its function is as follows. Catalyzes the ATP-dependent amidation of deamido-NAD to form NAD. Uses ammonia as a nitrogen source. The polypeptide is NH(3)-dependent NAD(+) synthetase (Pectobacterium carotovorum subsp. carotovorum (strain PC1)).